The primary structure comprises 195 residues: L-rhamnose-binding lectin CSL3 (195 aa).

2 SUEL-type lectin domains span residues 1 to 95 and 105 to 195; these read AISI…YSCV and ICEG…YTCD.

Its function is as follows. L-rhamnose binding lectin. Has hemagglutinating activity towards rabbit erythrocytes, human type A erythrocytes, human type B erythrocytes, human type O erythrocytes and sheep erythrocytes. Hemagglutinating activity is inhibited by smooth-type lipopolysaccharide (LPS) from S.flexneri 1A, A.salmonicida and E.coli K12, but not by rough-type LPS from S.flexneri, E.coli K12 and E.coli EH100. Agglutinates E.coli K12 and B.subtilis. This chain is L-rhamnose-binding lectin CSL3, found in Oncorhynchus keta (Chum salmon).